A 77-amino-acid chain; its full sequence is Putative antitoxin VapB3 (77 aa).

The protein belongs to the UPF0330 family.

In terms of biological role, possibly the antitoxin component of a type II toxin-antitoxin (TA) system. Its cognate toxin is VapC3 (Potential). This Methanocaldococcus jannaschii (strain ATCC 43067 / DSM 2661 / JAL-1 / JCM 10045 / NBRC 100440) (Methanococcus jannaschii) protein is Putative antitoxin VapB3 (vapB3).